Consider the following 267-residue polypeptide: Malonyl-[acyl-carrier protein] O-methyltransferase (267 aa).

The protein belongs to the methyltransferase superfamily.

The catalysed reaction is malonyl-[ACP] + S-adenosyl-L-methionine = malonyl-[ACP] methyl ester + S-adenosyl-L-homocysteine. It participates in cofactor biosynthesis; biotin biosynthesis. Converts the free carboxyl group of a malonyl-thioester to its methyl ester by transfer of a methyl group from S-adenosyl-L-methionine (SAM). It allows to synthesize pimeloyl-ACP via the fatty acid synthetic pathway. The protein is Malonyl-[acyl-carrier protein] O-methyltransferase of Yersinia pestis.